The following is a 241-amino-acid chain: Glucosamine-6-phosphate deaminase (241 aa).

Aspartate 67 (proton acceptor; for enolization step) is an active-site residue. Residue asparagine 136 is the For ring-opening step of the active site. Residue histidine 138 is the Proton acceptor; for ring-opening step of the active site. Residue glutamate 143 is the For ring-opening step of the active site.

Belongs to the glucosamine/galactosamine-6-phosphate isomerase family. NagB subfamily.

It carries out the reaction alpha-D-glucosamine 6-phosphate + H2O = beta-D-fructose 6-phosphate + NH4(+). It functions in the pathway amino-sugar metabolism; N-acetylneuraminate degradation; D-fructose 6-phosphate from N-acetylneuraminate: step 5/5. Its function is as follows. Catalyzes the reversible isomerization-deamination of glucosamine 6-phosphate (GlcN6P) to form fructose 6-phosphate (Fru6P) and ammonium ion. This Clostridium novyi (strain NT) protein is Glucosamine-6-phosphate deaminase.